The primary structure comprises 206 residues: Somatotropin (206 aa).

The signal sequence occupies residues 1 to 18 (MLDRVVVLLSVLCLGVSS). Position 19 is a pyrrolidone carboxylic acid (Gln-19). Zn(2+) is bound at residue His-37. Cys-70 and Cys-179 are oxidised to a cystine. A Zn(2+)-binding site is contributed by Glu-188. The cysteines at positions 196 and 204 are disulfide-linked.

This sequence belongs to the somatotropin/prolactin family.

It localises to the secreted. Its function is as follows. Growth hormone plays an important role in growth control and is involved in the regulation of several anabolic processes. Implicated as an osmoregulatory substance important for seawater adaptation. The protein is Somatotropin (gh) of Pseudocaranx dentex (White trevally).